Reading from the N-terminus, the 91-residue chain is Small ribosomal subunit protein bS20 (91 aa).

Belongs to the bacterial ribosomal protein bS20 family.

Binds directly to 16S ribosomal RNA. The chain is Small ribosomal subunit protein bS20 from Caulobacter vibrioides (strain ATCC 19089 / CIP 103742 / CB 15) (Caulobacter crescentus).